A 182-amino-acid chain; its full sequence is Acireductone dioxygenase (182 aa).

Fe(2+) contacts are provided by histidine 100, histidine 102, glutamate 106, and histidine 145. Ni(2+) contacts are provided by histidine 100, histidine 102, glutamate 106, and histidine 145.

This sequence belongs to the acireductone dioxygenase (ARD) family. Monomer. The cofactor is Fe(2+). Ni(2+) serves as cofactor.

It carries out the reaction 1,2-dihydroxy-5-(methylsulfanyl)pent-1-en-3-one + O2 = 3-(methylsulfanyl)propanoate + CO + formate + 2 H(+). It catalyses the reaction 1,2-dihydroxy-5-(methylsulfanyl)pent-1-en-3-one + O2 = 4-methylsulfanyl-2-oxobutanoate + formate + 2 H(+). The protein operates within amino-acid biosynthesis; L-methionine biosynthesis via salvage pathway; L-methionine from S-methyl-5-thio-alpha-D-ribose 1-phosphate: step 5/6. In terms of biological role, catalyzes 2 different reactions between oxygen and the acireductone 1,2-dihydroxy-3-keto-5-methylthiopentene (DHK-MTPene) depending upon the metal bound in the active site. Fe-containing acireductone dioxygenase (Fe-ARD) produces formate and 2-keto-4-methylthiobutyrate (KMTB), the alpha-ketoacid precursor of methionine in the methionine recycle pathway. Ni-containing acireductone dioxygenase (Ni-ARD) produces methylthiopropionate, carbon monoxide and formate, and does not lie on the methionine recycle pathway. The chain is Acireductone dioxygenase from Trichormus variabilis (strain ATCC 29413 / PCC 7937) (Anabaena variabilis).